Here is a 272-residue protein sequence, read N- to C-terminus: NADPH-dependent 7-cyano-7-deazaguanine reductase (272 aa).

Ile-82 to Ser-84 contacts substrate. Ser-84–Lys-85 is an NADPH binding site. Cys-178 functions as the Thioimide intermediate in the catalytic mechanism. The active-site Proton donor is the Asp-185. His-217–Glu-218 provides a ligand contact to substrate. Arg-246 to Gly-247 contacts NADPH.

This sequence belongs to the GTP cyclohydrolase I family. QueF type 2 subfamily. In terms of assembly, homodimer.

It is found in the cytoplasm. The enzyme catalyses 7-aminomethyl-7-carbaguanine + 2 NADP(+) = 7-cyano-7-deazaguanine + 2 NADPH + 3 H(+). It participates in tRNA modification; tRNA-queuosine biosynthesis. In terms of biological role, catalyzes the NADPH-dependent reduction of 7-cyano-7-deazaguanine (preQ0) to 7-aminomethyl-7-deazaguanine (preQ1). This is NADPH-dependent 7-cyano-7-deazaguanine reductase from Stenotrophomonas maltophilia (strain R551-3).